A 380-amino-acid polypeptide reads, in one-letter code: 8-amino-7-oxononanoate synthase (380 aa).

Position 26 (Arg-26) interacts with substrate. A pyridoxal 5'-phosphate-binding site is contributed by 104–105 (GY). His-129 lines the substrate pocket. Residues Ser-175, 200-203 (DEAH), and 232-235 (TLSK) each bind pyridoxal 5'-phosphate. The residue at position 235 (Lys-235) is an N6-(pyridoxal phosphate)lysine. Thr-345 is a binding site for substrate.

Belongs to the class-II pyridoxal-phosphate-dependent aminotransferase family. BioF subfamily. In terms of assembly, homodimer. Pyridoxal 5'-phosphate is required as a cofactor.

It carries out the reaction 6-carboxyhexanoyl-[ACP] + L-alanine + H(+) = (8S)-8-amino-7-oxononanoate + holo-[ACP] + CO2. It functions in the pathway cofactor biosynthesis; biotin biosynthesis. Its function is as follows. Catalyzes the decarboxylative condensation of pimeloyl-[acyl-carrier protein] and L-alanine to produce 8-amino-7-oxononanoate (AON), [acyl-carrier protein], and carbon dioxide. The sequence is that of 8-amino-7-oxononanoate synthase from Mycolicibacterium gilvum (strain PYR-GCK) (Mycobacterium gilvum (strain PYR-GCK)).